The chain runs to 261 residues: MSITSIPQPHETNEQHHTEIQHHRSAILNNDLVVLISIAFSALLYFIFDKDNFEKNPCLRLITTLFPLSYLAAQHLLLFHTSWKGNNKPEDTLHKALRYFFSALFITFATIFILSIIILTNDNWSKDDDPLFFSIVLPSFFIPPTYLLSISCSLVPGQTGFTDTGINILIDVLILLCFIVNFIFMHEKSKYRLYSAVTFPLLVLVRLLTEKYYPSGKSSLPTTTWRVVAFVLIFILVIYTYTDMGCEAILTLDYYFTYLTR.

Residues 1-20 (MSITSIPQPHETNEQHHTEI) are disordered. A compositionally biased stretch (basic and acidic residues) spans 11–20 (ETNEQHHTEI).

Belongs to the UPF0328 family.

The protein is UPF0328 protein ECU02_0020/ECU04_1700 of Encephalitozoon cuniculi (strain GB-M1) (Microsporidian parasite).